We begin with the raw amino-acid sequence, 342 residues long: Small ribosomal subunit protein uS2 (342 aa).

Residues 235–283 form a disordered region; that stretch reads EENAPFEQDEPRKPSQKPKQNRPENKPRFDKQAPRAAAKPEVKAEVKPE. Residues 255 to 283 are compositionally biased toward basic and acidic residues; it reads NRPENKPRFDKQAPRAAAKPEVKAEVKPE.

It belongs to the universal ribosomal protein uS2 family.

This chain is Small ribosomal subunit protein uS2, found in Acholeplasma laidlawii (strain PG-8A).